A 508-amino-acid chain; its full sequence is Zinc finger CCCH-type with G patch domain-containing protein (508 aa).

The segment at 67–86 (QQESSHHDSGTPETDTKTSV) is disordered. Residues 69–86 (ESSHHDSGTPETDTKTSV) show a composition bias toward basic and acidic residues. Residues 161-188 (RSMVPCPYFLEGKCKFAGAECRFSHGYL) form a C3H1-type zinc finger. Positions 253-282 (IYPLGPEEVESDSESDSQSDTGDSSSSKAA) are disordered. The segment covering 259–269 (EEVESDSESDS) has biased composition (acidic residues). Over residues 270–279 (QSDTGDSSSS) the composition is skewed to low complexity. In terms of domain architecture, G-patch spans 310–356 (TKGIGSKLMAKMGYIFGKGLGKDGEGRVEPIEVVVLPQGKSLDKCAE). The segment at 404-426 (SLHDLRVSHPGAKPDIRKTRKSA) is disordered.

Its subcellular location is the nucleus. In terms of biological role, transcription repressor. The protein is Zinc finger CCCH-type with G patch domain-containing protein of Nematostella vectensis (Starlet sea anemone).